We begin with the raw amino-acid sequence, 213 residues long: MNESLLTQFGNSLTRVEKALENLKNGKGVLLVDDENRENEGDLIFPAETITVPQMAMLIRECSGIVCLCLTDEKVKKLGLTQMVSNNTCTYETAFTISIEAKEGVTTGVSAADRVTTILTAVKDDCKPEDLCHPGHVFPLRARAGGVLTRPGHTEGTVDLMRLAGYNPAGILCELTNPDGTMARLPQIINFAKKHNLTILSIEDIIKYKEIVT.

D-ribulose 5-phosphate is bound by residues 37–38 (RE), D42, 150–154 (RPGHT), and E174. Residue E38 participates in Mg(2+) binding. H153 lines the Mg(2+) pocket.

This sequence belongs to the DHBP synthase family. As to quaternary structure, homodimer. Mg(2+) is required as a cofactor. Mn(2+) serves as cofactor.

It catalyses the reaction D-ribulose 5-phosphate = (2S)-2-hydroxy-3-oxobutyl phosphate + formate + H(+). It participates in cofactor biosynthesis; riboflavin biosynthesis; 2-hydroxy-3-oxobutyl phosphate from D-ribulose 5-phosphate: step 1/1. Its function is as follows. Catalyzes the conversion of D-ribulose 5-phosphate to formate and 3,4-dihydroxy-2-butanone 4-phosphate. This chain is 3,4-dihydroxy-2-butanone 4-phosphate synthase, found in Clostridium botulinum (strain Langeland / NCTC 10281 / Type F).